The primary structure comprises 58 residues: Large ribosomal subunit protein uL30 (58 aa).

The protein belongs to the universal ribosomal protein uL30 family. In terms of assembly, part of the 50S ribosomal subunit.

In Buchnera aphidicola subsp. Baizongia pistaciae (strain Bp), this protein is Large ribosomal subunit protein uL30.